The sequence spans 405 residues: L-rhamnonate dehydratase (405 aa).

Positions 33 and 59 each coordinate substrate. The Mg(2+) site is built by aspartate 226, glutamate 252, and glutamate 280. Catalysis depends on histidine 329, which acts as the Proton acceptor. Glutamate 349 contributes to the substrate binding site.

This sequence belongs to the mandelate racemase/muconate lactonizing enzyme family. RhamD subfamily. In terms of assembly, homooctamer; tetramer of dimers. Mg(2+) serves as cofactor.

The enzyme catalyses L-rhamnonate = 2-dehydro-3-deoxy-L-rhamnonate + H2O. In terms of biological role, catalyzes the dehydration of L-rhamnonate to 2-keto-3-deoxy-L-rhamnonate (KDR). The polypeptide is L-rhamnonate dehydratase (Escherichia coli O81 (strain ED1a)).